Reading from the N-terminus, the 281-residue chain is Transmembrane protein 163 (281 aa).

The Cytoplasmic segment spans residues M1–A80. A disordered region spans residues I16–M44. The helical transmembrane segment at L81–V101 threads the bilayer. Residues S102–A108 are Extracellular-facing. The helical transmembrane segment at S109–W129 threads the bilayer. Topologically, residues R130–M145 are cytoplasmic. A helical transmembrane segment spans residues A146–I166. The Extracellular segment spans residues H167–G179. A helical transmembrane segment spans residues F180–F200. The Cytoplasmic portion of the chain corresponds to M201–R209. Residues A210–L230 form a helical membrane-spanning segment. Topologically, residues S231 to K240 are extracellular. Residues V241 to I261 traverse the membrane as a helical segment. Residues K262–E281 are Cytoplasmic-facing.

Belongs to the TMEM163 family.

It is found in the cytoplasmic vesicle. Its subcellular location is the secretory vesicle. The protein resides in the synaptic vesicle membrane. It localises to the early endosome membrane. Functionally, may bind zinc and other divalent cations and recruit them to vesicular organelles. The protein is Transmembrane protein 163 (tmem163) of Xenopus laevis (African clawed frog).